The primary structure comprises 169 residues: Protein-export protein SecB (169 aa).

It belongs to the SecB family. As to quaternary structure, homotetramer, a dimer of dimers. One homotetramer interacts with 1 SecA dimer.

It is found in the cytoplasm. One of the proteins required for the normal export of preproteins out of the cell cytoplasm. It is a molecular chaperone that binds to a subset of precursor proteins, maintaining them in a translocation-competent state. It also specifically binds to its receptor SecA. The chain is Protein-export protein SecB from Haemophilus influenzae (strain PittEE).